Consider the following 347-residue polypeptide: Tetraacyldisaccharide 4'-kinase (347 aa).

Position 64–71 (64–71 (YVGGTGKT)) interacts with ATP.

It belongs to the LpxK family.

The enzyme catalyses a lipid A disaccharide + ATP = a lipid IVA + ADP + H(+). The protein operates within glycolipid biosynthesis; lipid IV(A) biosynthesis; lipid IV(A) from (3R)-3-hydroxytetradecanoyl-[acyl-carrier-protein] and UDP-N-acetyl-alpha-D-glucosamine: step 6/6. Transfers the gamma-phosphate of ATP to the 4'-position of a tetraacyldisaccharide 1-phosphate intermediate (termed DS-1-P) to form tetraacyldisaccharide 1,4'-bis-phosphate (lipid IVA). This chain is Tetraacyldisaccharide 4'-kinase, found in Bordetella bronchiseptica (strain ATCC BAA-588 / NCTC 13252 / RB50) (Alcaligenes bronchisepticus).